A 543-amino-acid chain; its full sequence is Chaperonin GroEL (543 aa).

ATP contacts are provided by residues 29 to 32 (TLGP), 86 to 90 (DGTTT), glycine 413, 478 to 480 (DAL), and aspartate 494. The disordered stretch occupies residues 524–543 (PEPEAPAVPAGMPGGMGGMY).

It belongs to the chaperonin (HSP60) family. Forms a cylinder of 14 subunits composed of two heptameric rings stacked back-to-back. Interacts with the co-chaperonin GroES.

It localises to the cytoplasm. It carries out the reaction ATP + H2O + a folded polypeptide = ADP + phosphate + an unfolded polypeptide.. Together with its co-chaperonin GroES, plays an essential role in assisting protein folding. The GroEL-GroES system forms a nano-cage that allows encapsulation of the non-native substrate proteins and provides a physical environment optimized to promote and accelerate protein folding. The polypeptide is Chaperonin GroEL (Ruminiclostridium cellulolyticum (strain ATCC 35319 / DSM 5812 / JCM 6584 / H10) (Clostridium cellulolyticum)).